The following is a 348-amino-acid chain: Neuronal growth regulator 1 (348 aa).

Residues 1–31 form the signal peptide; the sequence is MVLLAQGACCSNQWLAAVLLSLCSCLPAGQS. Ig-like C2-type domains follow at residues 32 to 128, 133 to 215, and 219 to 307; these read VDFP…VHLT, PKIY…RVIV, and PTIQ…LPLN. An intrachain disulfide couples Cys54 to Cys112. N-linked (GlcNAc...) asparagine glycosylation is found at Asn67 and Asn149. 2 disulfide bridges follow: Cys154–Cys197 and Cys239–Cys291. Tyr181 bears the Phosphotyrosine mark. N-linked (GlcNAc...) asparagine glycosylation is found at Asn269, Asn280, Asn288, and Asn301. The GPI-anchor amidated glycine moiety is linked to residue Gly318. A propeptide spans 319–348 (removed in mature form); it reads SACDLFSCWSLALTLSSVISIFYLKNAILQ.

Belongs to the immunoglobulin superfamily. IgLON family. As to expression, expressed in brain.

It localises to the cell membrane. May be involved in cell-adhesion. May function as a trans-neural growth-promoting factor in regenerative axon sprouting in the mammalian brain. In Mus musculus (Mouse), this protein is Neuronal growth regulator 1 (Negr1).